The primary structure comprises 207 residues: GILT-like protein 2 (207 aa).

Residues 1-19 (MRAAVFVCLLLGWVGVATP) form the signal peptide. Residues Cys40 and Cys43 are joined by a disulfide bond. N-linked (GlcNAc...) asparagine glycosylation is present at Asn182.

Belongs to the GILT family.

It is found in the secreted. In terms of biological role, probable lysosomal thiol reductase that can reduce protein disulfide bonds. Involved in the immune response to bacterial infection. This Drosophila melanogaster (Fruit fly) protein is GILT-like protein 2.